The following is a 171-amino-acid chain: Cyclin-dependent kinase inhibitor 2A (171 aa).

Residues 33–42 are compositionally biased toward basic and acidic residues; it reads ASMHTKHESE. Residues 33 to 52 are disordered; sequence ASMHTKHESEESFSGEKLTE. ANK repeat units follow at residues 45–74, 78–106, and 111–140; these read FSGE…NPNA, FGRS…EPNT, and TLTL…RLDV.

Belongs to the CDKN2 cyclin-dependent kinase inhibitor family. In terms of assembly, heterodimer with CDK4 or CDK6. Predominamt P16 complexes contained CDK6. Interacts with CDK4 (both 'T-172'-phosphorylated and non-phosphorylated forms); the interaction inhibits cyclin D-CDK4 kinase activity. Interacts with ISCO2. As to expression, expressed predominantly in lung and testis. In the testis, restricted to germ cells in the seminiferous epithelium. Not detected in premeiotic spermatogonia but high levels found in postmeiotic spermatids. In primary tumors, low levels detected in melanocytic hyperplasias. Higher levels found in non-metastatic and metastatic melanomas.

The protein resides in the cytoplasm. It is found in the nucleus. Acts as a negative regulator of the proliferation of normal cells by interacting strongly with CDK4 and CDK6. This inhibits their ability to interact with cyclins D and to phosphorylate the retinoblastoma protein. The sequence is that of Cyclin-dependent kinase inhibitor 2A from Monodelphis domestica (Gray short-tailed opossum).